A 131-amino-acid polypeptide reads, in one-letter code: Protein GLUTAMINE DUMPER 5 (131 aa).

At Met-1–Tyr-34 the chain is on the extracellular side. Residues Leu-35–Cys-55 form a helical membrane-spanning segment. The Cytoplasmic segment spans residues Ser-56–His-131. The short motif at Val-88–Gly-92 is the VIMAG element.

It belongs to the GLUTAMINE DUMPER 1 (TC 9.B.60) family. In terms of tissue distribution, expressed in the vascular tissues. Also detected in guard cells.

Its subcellular location is the membrane. Its function is as follows. Probable subunit of an amino acid transporter involved in the regulation of the amino acid metabolism. Stimulates amino acid export by activating nonselective amino acid facilitators. In Arabidopsis thaliana (Mouse-ear cress), this protein is Protein GLUTAMINE DUMPER 5 (GDU5).